Here is a 485-residue protein sequence, read N- to C-terminus: Forkhead box protein N3 (485 aa).

2 disordered regions span residues 1 to 54 and 85 to 108; these read MGPV…KGGM and PVQDIDDDTPPSPAQSDMPYDAKQ. The segment covering 16 to 30 has biased composition (polar residues); it reads ISVSSQCYRSSTLSN. Residues 113 to 209 constitute a DNA-binding region (fork-head); the sequence is KPPYSFSCLI…QALKKTPYHP (97 aa). Disordered stretches follow at residues 316–357 and 401–449; these read MESE…ISSS and PLVE…MKEA. Low complexity predominate over residues 338 to 357; sequence SSAKSANKRSSSPSDSISSS. Residues 410–422 are compositionally biased toward basic residues; sequence QHKKKQHLLKLRR.

In terms of tissue distribution, at early cleavage stages, localized within the animal half of the embryo. At gastrulation, expression expands over the whole embryo excluding the future endodermal cells of the blastopore. During neurulation, expressed in the prospective eye field and in the neural crest cells. Strongly enriched in the eye vesicles at stage 26. From stage 29 onwards, expressed predominantly in the eye, the branchial arches and the vagal ganglion. At stage 38, expressed throughout the head with strongest expression in the head mesenchyme and the eye lens.

It localises to the nucleus. Functionally, acts as a transcriptional repressor. May be involved in DNA damage-inducible cell cycle arrests (checkpoints). The protein is Forkhead box protein N3 of Xenopus laevis (African clawed frog).